The following is a 300-amino-acid chain: Putative S-adenosyl-L-methionine-dependent methyltransferase MUL_0817 (300 aa).

S-adenosyl-L-methionine-binding positions include Asp127 and 156–157 (DL).

Belongs to the UPF0677 family.

Functionally, exhibits S-adenosyl-L-methionine-dependent methyltransferase activity. The protein is Putative S-adenosyl-L-methionine-dependent methyltransferase MUL_0817 of Mycobacterium ulcerans (strain Agy99).